The sequence spans 318 residues: Ribosomal protein L11 methyltransferase (318 aa).

Positions 161, 182, 204, and 247 each coordinate S-adenosyl-L-methionine.

Belongs to the methyltransferase superfamily. PrmA family.

It is found in the cytoplasm. It carries out the reaction L-lysyl-[protein] + 3 S-adenosyl-L-methionine = N(6),N(6),N(6)-trimethyl-L-lysyl-[protein] + 3 S-adenosyl-L-homocysteine + 3 H(+). Methylates ribosomal protein L11. The polypeptide is Ribosomal protein L11 methyltransferase (Moorella thermoacetica (strain ATCC 39073 / JCM 9320)).